The primary structure comprises 229 residues: Ribonuclease 3 (229 aa).

Residues 5-127 (LAGLERKLGY…LIGAIYLDAD (123 aa)) enclose the RNase III domain. Residue Glu40 coordinates Mg(2+). The active site involves Asp44. Residues Asp113 and Glu116 each contribute to the Mg(2+) site. Glu116 is a catalytic residue. Positions 154-224 (DPKTRLQEFL…AASALIALGV (71 aa)) constitute a DRBM domain.

It belongs to the ribonuclease III family. As to quaternary structure, homodimer. Mg(2+) serves as cofactor.

The protein localises to the cytoplasm. It catalyses the reaction Endonucleolytic cleavage to 5'-phosphomonoester.. In terms of biological role, digests double-stranded RNA. Involved in the processing of primary rRNA transcript to yield the immediate precursors to the large and small rRNAs (23S and 16S). Processes some mRNAs, and tRNAs when they are encoded in the rRNA operon. Processes pre-crRNA and tracrRNA of type II CRISPR loci if present in the organism. This Pseudomonas putida (strain ATCC 700007 / DSM 6899 / JCM 31910 / BCRC 17059 / LMG 24140 / F1) protein is Ribonuclease 3.